The primary structure comprises 1059 residues: Ceruloplasmin (1059 aa).

The first 19 residues, 1–19 (MKFLLLSALLFLHSSLAWT), serve as a signal peptide directing secretion. Plastocyanin-like domains follow at residues 20 to 199 (REKH…LILC), 208 to 356 (KEEN…VRDC), 369 to 554 (HVRH…MKIC), 564 to 712 (RQKD…VNQC), 724 to 894 (GERT…LIVC), and 902 to 1055 (FNPK…PNQE). Na(+) contacts are provided by tyrosine 55, glycine 64, and tyrosine 67. Histidine 120 and histidine 122 together coordinate Cu(2+). Histidine 120 is a binding site for O2. Lysine 128 provides a ligand contact to Ca(2+). The N-linked (GlcNAc...) asparagine glycan is linked to asparagine 138. Ca(2+)-binding residues include glutamine 143, aspartate 146, and aspartate 147. Cysteine 173 and cysteine 199 are disulfide-bonded. 2 residues coordinate Cu(2+): histidine 179 and histidine 181. O2 is bound at residue histidine 179. N-linked (GlcNAc...) asparagine glycosylation occurs at asparagine 226. Serine 255 is a Na(+) binding site. A disulfide bond links cysteine 275 and cysteine 356. The Cu(2+) site is built by histidine 294, cysteine 337, and histidine 342. Asparagine 396 carries N-linked (GlcNAc...) asparagine glycosylation. Na(+) contacts are provided by phenylalanine 407, glycine 416, and tyrosine 419. Cysteine 528 and cysteine 554 are oxidised to a cystine. N-linked (GlcNAc...) asparagine glycosylation is present at asparagine 582. Serine 611 provides a ligand contact to Na(+). A disulfide bridge connects residues cysteine 631 and cysteine 712. The Cu(2+) site is built by histidine 650, cysteine 693, histidine 698, and methionine 703. The active-site Nucleophile; for glutathione peroxidase activity is the cysteine 693. An N-linked (GlcNAc...) asparagine glycan is attached at asparagine 756. Residues phenylalanine 761, glycine 770, and tyrosine 773 each coordinate Na(+). Cysteine 868 and cysteine 894 form a disulfide bridge. An N-linked (GlcNAc...) asparagine glycan is attached at asparagine 920. Serine 949 is a Na(+) binding site. The Cu(2+) site is built by histidine 988, histidine 991, histidine 993, histidine 1033, cysteine 1034, histidine 1035, histidine 1039, and methionine 1044. Residues histidine 991 and histidine 993 each coordinate O2. Histidine 1035 is a binding site for O2.

Belongs to the multicopper oxidase family. As to quaternary structure, found in a complex with MPO and LTF; interacts directly with MPO and LTF, which allows Fe(3+) incorporation into LTF, activation of CP ferroxidase activity and protection of CP antioxidant properties by MPO. The cofactor is Cu(2+). Synthesized in liver and secreted into the plasma. Also choroid plexus, yolk sac, placenta, and testis; not in stomach and small intestine. Fetal lung and liver.

The protein localises to the secreted. The enzyme catalyses 4 Fe(2+) + O2 + 4 H(+) = 4 Fe(3+) + 2 H2O. It catalyses the reaction 4 Cu(+) + O2 + 4 H(+) = 4 Cu(2+) + 2 H2O. It carries out the reaction a hydroperoxide + 2 glutathione = an alcohol + glutathione disulfide + H2O. The catalysed reaction is 4 nitric oxide + O2 + 2 H2O = 4 nitrite + 4 H(+). The enzyme catalyses 2 glutathione + H2O2 = glutathione disulfide + 2 H2O. Functionally, multifunctional blue, copper-binding (6-7 atoms per molecule) glycoprotein. It has ferroxidase activity oxidizing Fe(2+) to Fe(3+) without releasing radical oxygen species. It is involved in iron transport across the cell membrane. Copper ions provide a large number of enzymatic activites. Oxidizes highly toxic ferrous ions to the ferric state for further incorporation onto apo-transferrins, catalyzes Cu(+) oxidation and promotes the oxidation of biogenic amines such as norepinephrin and serotonin. Provides Cu(2+) ions for the ascorbate-mediated deaminase degradation of the heparan sulfate chains of GPC1. Has glutathione peroxidase-like activity, can remove both hydrogen peroxide and lipid hydroperoxide in the presence of thiols. Also shows NO-oxidase and NO2 synthase activities that determine endocrine NO homeostasis. In Rattus norvegicus (Rat), this protein is Ceruloplasmin (Cp).